The sequence spans 231 residues: Large ribosomal subunit protein uL1 (231 aa).

It belongs to the universal ribosomal protein uL1 family. As to quaternary structure, part of the 50S ribosomal subunit.

Its function is as follows. Binds directly to 23S rRNA. The L1 stalk is quite mobile in the ribosome, and is involved in E site tRNA release. Functionally, protein L1 is also a translational repressor protein, it controls the translation of the L11 operon by binding to its mRNA. The polypeptide is Large ribosomal subunit protein uL1 (Acinetobacter baumannii (strain AB307-0294)).